Consider the following 154-residue polypeptide: 3-dehydroquinate dehydratase 2 (154 aa).

Tyr23 acts as the Proton acceptor in catalysis. The substrate site is built by Asn79, His85, and Asp92. The active-site Proton donor is His105. Residues 106–107 and Arg116 each bind substrate; that span reads IS.

The protein belongs to the type-II 3-dehydroquinase family. In terms of assembly, homododecamer.

It carries out the reaction 3-dehydroquinate = 3-dehydroshikimate + H2O. It functions in the pathway metabolic intermediate biosynthesis; chorismate biosynthesis; chorismate from D-erythrose 4-phosphate and phosphoenolpyruvate: step 3/7. In terms of biological role, catalyzes a trans-dehydration via an enolate intermediate. This Ralstonia nicotianae (strain ATCC BAA-1114 / GMI1000) (Ralstonia solanacearum) protein is 3-dehydroquinate dehydratase 2 (aroQ2).